We begin with the raw amino-acid sequence, 205 residues long: D-alanine--D-alanine ligase (205 aa).

The ATP-grasp domain maps to 111–205; that stretch reads KHVLKSLGID…LGRAIGTMEF (95 aa). Position 139-190 (139-190) interacts with ATP; the sequence is MPYPFVIKPICGGSTIGVHAIFSRSEYLDLSVHADALEGRMLVEEYIPGQEV.

It belongs to the D-alanine--D-alanine ligase family. Mg(2+) is required as a cofactor. Requires Mn(2+) as cofactor.

It is found in the cytoplasm. It carries out the reaction 2 D-alanine + ATP = D-alanyl-D-alanine + ADP + phosphate + H(+). It functions in the pathway cell wall biogenesis; peptidoglycan biosynthesis. Its function is as follows. Cell wall formation. The protein is D-alanine--D-alanine ligase (ddl) of Anaplasma centrale.